The sequence spans 311 residues: HPr kinase/phosphorylase (311 aa).

Active-site residues include His139 and Lys160. Position 154–161 (154–161 (GASGVGKS)) interacts with ATP. Ser161 is a binding site for Mg(2+). Catalysis depends on Asp178, which acts as the Proton acceptor; for phosphorylation activity. Proton donor; for dephosphorylation activity. Residues 202-211 (LEIRGIGIID) form an important for the catalytic mechanism of both phosphorylation and dephosphorylation region. Glu203 serves as a coordination point for Mg(2+). The active site involves Arg244. The tract at residues 265–270 (PVRPGR) is important for the catalytic mechanism of dephosphorylation.

Belongs to the HPrK/P family. Homohexamer. Requires Mg(2+) as cofactor.

It catalyses the reaction [HPr protein]-L-serine + ATP = [HPr protein]-O-phospho-L-serine + ADP + H(+). The enzyme catalyses [HPr protein]-O-phospho-L-serine + phosphate + H(+) = [HPr protein]-L-serine + diphosphate. Catalyzes the ATP- as well as the pyrophosphate-dependent phosphorylation of a specific serine residue in HPr, a phosphocarrier protein of the phosphoenolpyruvate-dependent sugar phosphotransferase system (PTS). HprK/P also catalyzes the pyrophosphate-producing, inorganic phosphate-dependent dephosphorylation (phosphorolysis) of seryl-phosphorylated HPr (P-Ser-HPr). The two antagonistic activities of HprK/P are regulated by several intracellular metabolites, which change their concentration in response to the absence or presence of rapidly metabolisable carbon sources (glucose, fructose, etc.) in the growth medium. Therefore, by controlling the phosphorylation state of HPr, HPrK/P is a sensor enzyme that plays a major role in the regulation of carbon metabolism and sugar transport: it mediates carbon catabolite repression (CCR), and regulates PTS-catalyzed carbohydrate uptake and inducer exclusion. This Exiguobacterium sibiricum (strain DSM 17290 / CCUG 55495 / CIP 109462 / JCM 13490 / 255-15) protein is HPr kinase/phosphorylase.